Reading from the N-terminus, the 816-residue chain is H(+)/Cl(-) exchange transporter 5 (816 aa).

Topologically, residues 1–124 (MAMWQGAMDN…WALIHSVSDA (124 aa)) are cytoplasmic. 2 helical membrane-spanning segments follow: residues 125–162 (FSGW…ICTG) and 208–231 (VNYF…VKAF). Positions 237 to 241 (GSGIP) match the Selectivity filter part_1 motif. S238 is a chloride binding site. Residues 240–247 (IPEIKTIL) constitute an intramembrane region (helical). The next 2 helical transmembrane spans lie at 256–275 (LGKW…VSSG) and 281–300 (EGPL…HCFN). The Selectivity filter part_2 signature appears at 279–283 (GKEGP). 2 intramembrane regions (helical) span residues 312 to 324 (VLSA…VSVA) and 328 to 336 (PIGGVLFSL). Helical transmembrane passes span 348 to 366 (LWRS…RSIN), 389 to 414 (LVPF…IAWC), 422 to 442 (LGKY…ILAF), 498 to 518 (MWQL…TFGM), and 523 to 542 (GLFI…LGVG). A Selectivity filter part_3 motif is present at residues 523 to 527 (GLFIP). Position 525 (F525) interacts with chloride. The segment at residues 570–584 (GLYAMVGAAACLGGV) is an intramembrane region (helical). Positions 585–587 (TRM) form an intramembrane region, note=Loop between two helices. The segment at residues 588–599 (TVSLVVIMFELT) is an intramembrane region (helical). An intramembrane region (note=Loop between two helices) is located at residues 600–604 (GGLEY). The helical transmembrane segment at 605-622 (IVPLMAAAMTSKWVADAL) threads the bilayer. Over 623–816 (GREGIYDAHI…NQDPDSILFN (194 aa)) the chain is Cytoplasmic. Y628 provides a ligand contact to chloride. 2 consecutive CBS domains span residues 656 to 720 (MKPR…ARKK) and 752 to 812 (ILDL…DPDS). Residues T666, 687–689 (YSG), and 794–797 (TKKD) each bind ATP.

This sequence belongs to the chloride channel (TC 2.A.49) family. ClC-5/CLCN5 subfamily. Interacts with NEDD4 and NEDD4L. Ubiquitinated by NEDD4L in the presence of albumin; which promotes endocytosis and proteasomal degradation. As to expression, kidney specific.

It localises to the golgi apparatus membrane. It is found in the endosome membrane. Its subcellular location is the cell membrane. The catalysed reaction is 2 chloride(in) + H(+)(out) = 2 chloride(out) + H(+)(in). Proton-coupled chloride transporter. Functions as antiport system and exchanges chloride ions against protons. Important for normal acidification of the endosome lumen. May play an important role in renal tubular function. The CLC channel family contains both chloride channels and proton-coupled anion transporters that exchange chloride or another anion for protons. The absence of conserved gating glutamate residues is typical for family members that function as channels. This is H(+)/Cl(-) exchange transporter 5 (Clcn5) from Mus musculus (Mouse).